A 360-amino-acid chain; its full sequence is Aminomethyltransferase (360 aa).

This sequence belongs to the GcvT family. As to quaternary structure, the glycine cleavage system is composed of four proteins: P, T, L and H.

The enzyme catalyses N(6)-[(R)-S(8)-aminomethyldihydrolipoyl]-L-lysyl-[protein] + (6S)-5,6,7,8-tetrahydrofolate = N(6)-[(R)-dihydrolipoyl]-L-lysyl-[protein] + (6R)-5,10-methylene-5,6,7,8-tetrahydrofolate + NH4(+). Functionally, the glycine cleavage system catalyzes the degradation of glycine. The polypeptide is Aminomethyltransferase (Pseudomonas aeruginosa (strain ATCC 15692 / DSM 22644 / CIP 104116 / JCM 14847 / LMG 12228 / 1C / PRS 101 / PAO1)).